The sequence spans 1321 residues: Bile salt export pump (1321 aa).

At 1–62 (MSDSVILRSV…FSSSKDIWLM (62 aa)) the chain is on the cytoplasmic side. Residues 62–385 (MLMGGVCALL…ASSCLEIFST (324 aa)) enclose the ABC transmembrane type-1 1 domain. Residues 63-83 (LMGGVCALLHGMAQPGILIIF) traverse the membrane as a helical segment. Residues 84–147 (GIMTDIFIKY…MIKFSGIYAG (64 aa)) lie on the Extracellular side of the membrane. Residues Asn109, Asn116, Asn122, and Asn125 are each glycosylated (N-linked (GlcNAc...) asparagine). Residues 148 to 168 (VGMTVLILGYFQIRLWVITGA) traverse the membrane as a helical segment. The Cytoplasmic segment spans residues 169–215 (RQIRRMRKIYFRRIMRMEIGWFDCTSVGELNSRFADDIEKINDAIAD). A helical membrane pass occupies residues 216–236 (QLAHFLQRMSTAMCGLLLGFY). Over 237–240 (RGWK) the chain is Extracellular. The chain crosses the membrane as a helical span at residues 241–261 (LTLVILAVSPLIGIGAAVIGL). Topologically, residues 262–319 (SIAKFTELELKAYAKAGSIADEVLSSIRTVAAFGGENKEVERYEKNLVFAQRWGIWKG) are cytoplasmic. The helical transmembrane segment at 320-340 (MVMGFFTGYMWCLIFFCYALA) threads the bilayer. Residues 341–353 (FWYGSTLVLDEEE) lie on the Extracellular side of the membrane. A helical membrane pass occupies residues 354 to 374 (YTPGTLVQIFLCVILAAMNIG). Residues 375-755 (HASSCLEIFS…KYNIPEWHYI (381 aa)) are Cytoplasmic-facing. Positions 420–656 (IEFHNVTFHY…KGVYFMLVTL (237 aa)) constitute an ABC transporter 1 domain. An ATP-binding site is contributed by 455–462 (GSSGAGKS). At Thr586 the chain carries Phosphothreonine. A Phosphoserine modification is found at Ser587. Residues 651-674 (FMLVTLQSQGDNAHKETSIMGKDA) form an interaction with HAX1 region. Phosphoserine occurs at positions 692, 703, and 706. Residues 755–1043 (ILVGSLSAAI…TFSYTPSYAK (289 aa)) enclose the ABC transmembrane type-1 2 domain. Residues 756–776 (LVGSLSAAINGAVTPIYSLLF) traverse the membrane as a helical segment. Residues 777 to 794 (SQLLGTFSLLDKEQQRSE) are Extracellular-facing. Residues 795-815 (IHSMCLFFVILGCVSIFTQFL) traverse the membrane as a helical segment. At 816-869 (QGYTFAKSGELLTKRLRKFGFKAMLGQDIGWFDDLRNNPGVLTTRLATDASQVQ) the chain is on the cytoplasmic side. Helical transmembrane passes span 870–890 (GATG…IAAL) and 891–911 (LIAF…FPFL). Topologically, residues 912-979 (ALSGAVQTKM…SYKTAVRKAN (68 aa)) are cytoplasmic. A helical membrane pass occupies residues 980–1000 (IYGLCFAFSQGIAFLANSAAY). Residues 1001-1011 (RYGGYLIAYEG) lie on the Extracellular side of the membrane. A helical transmembrane segment spans residues 1012–1032 (LGFSHVFRVVSSVALSATAVG). Residues 1033 to 1321 (RTFSYTPSYA…KLVITGAPIS (289 aa)) are Cytoplasmic-facing. Residues 1078–1316 (IDFIDCKFTY…KGAYYKLVIT (239 aa)) form the ABC transporter 2 domain. 1113 to 1120 (GSSGCGKS) lines the ATP pocket. A Phosphoserine modification is found at Ser1321.

The protein belongs to the ABC transporter superfamily. ABCB family. Multidrug resistance exporter (TC 3.A.1.201) subfamily. Interacts with HAX1. Interacts with the adapter protein complex 2 (AP-2) throught AP2A2 or AP2A1; this interaction regulates cell membrane expression of ABCB11 through its internalization in a clathrin-dependent manner and its subsequent degradation. Post-translationally, ubiquitinated; short-chain ubiquitination regulates cell-Surface expression of ABCB11. In terms of processing, N-glycosylated. As to expression, expressed predominantly, if not exclusively in the liver, where it was further localized to the canalicular microvilli and to subcanalicular vesicles of the hepatocytes by in situ.

Its subcellular location is the apical cell membrane. The protein localises to the recycling endosome membrane. It is found in the endosome. It localises to the cell membrane. The catalysed reaction is cholate(in) + ATP + H2O = cholate(out) + ADP + phosphate + H(+). It catalyses the reaction taurocholate(in) + ATP + H2O = taurocholate(out) + ADP + phosphate + H(+). The enzyme catalyses glycocholate(in) + ATP + H2O = glycocholate(out) + ADP + phosphate + H(+). It carries out the reaction glycochenodeoxycholate(in) + ATP + H2O = glycochenodeoxycholate(out) + ADP + phosphate + H(+). The catalysed reaction is taurochenodeoxycholate(in) + ATP + H2O = taurochenodeoxycholate(out) + ADP + phosphate + H(+). It catalyses the reaction glycoursodeoxycholate(in) + ATP + H2O = glycoursodeoxycholate(out) + ADP + phosphate + H(+). The enzyme catalyses tauroursodeoxycholate(in) + ATP + H2O = tauroursodeoxycholate(out) + ADP + phosphate + H(+). It carries out the reaction taurodeoxycholate(in) + ATP + H2O = taurodeoxycholate(out) + ADP + phosphate + H(+). The catalysed reaction is pravastatin(in) + ATP + H2O = pravastatin(out) + ADP + phosphate + H(+). Its activity is regulated as follows. The uptake of taurocholate is inhibited by taurolithocholate sulfate with an IC(50) of 52.9 uM. Pravastatin competitively inhibits the transport of taurocholic acid. Cyclosporin A, glibenclamide, rifampicin and troglitazonestrongly competitively inhibit the transport activity of taurocholate. The canalicular transport activity of taurocholate is strongly dependent on canalicular membrane cholesterol content. The uptake of taurocholate is increased by short- and medium-chain fatty acids. Cholesterol increases transport capacity of taurocholate without affecting the affinity for the substrate. Functionally, catalyzes the transport of the major hydrophobic bile salts, such as taurine and glycine-conjugated cholic acid across the canalicular membrane of hepatocytes in an ATP-dependent manner, therefore participates in hepatic bile acid homeostasis and consequently to lipid homeostasis through regulation of biliary lipid secretion in a bile salts dependent manner. Transports taurine-conjugated bile salts more rapidly than glycine-conjugated bile salts. Also transports non-bile acid compounds, such as pravastatin and fexofenadine in an ATP-dependent manner and may be involved in their biliary excretion. The polypeptide is Bile salt export pump (Rattus norvegicus (Rat)).